A 181-amino-acid chain; its full sequence is Calmodulin-like protein 6 (181 aa).

EF-hand domains are found at residues Glu-33 to Asn-68, Pro-69 to Lys-104, Asn-107 to Pro-142, and Leu-143 to Lys-178. Asp-156, Asp-158, Asp-160, Thr-162, and Glu-167 together coordinate Ca(2+).

It belongs to the calmodulin family. Calglandulin subfamily. In terms of tissue distribution, expressed in prostate, thymus, heart, skeleton muscle, bone marrow and ovary.

The protein localises to the cytoplasm. It localises to the nucleus. The sequence is that of Calmodulin-like protein 6 (CALML6) from Homo sapiens (Human).